The sequence spans 1112 residues: cGMP-inhibited 3',5'-cyclic phosphodiesterase 3B (1112 aa).

Basic and acidic residues predominate over residues 1-10 (MRRDERDAKA). The interval 1–25 (MRRDERDAKAMRSLQPPDGAGSPPE) is interaction with RAPGEF3. Positions 1–26 (MRRDERDAKAMRSLQPPDGAGSPPES) are disordered. Position 13 is a phosphoserine (serine 13). 6 consecutive transmembrane segments (helical) span residues 88 to 108 (FVLA…AAWL), 117 to 137 (HSLS…CFLT), 152 to 172 (WWLL…WQWW), 192 to 212 (AAAG…TLAH), 220 to 240 (VLVL…LGSL), and 247 to 267 (LLSG…DHFF). Serine 295 carries the post-translational modification Phosphoserine; by PKB/AKT1 or PKB/AKT2. A phosphoserine mark is found at serine 296 and serine 442. Residues 418–471 (EKGDRKLNKGLNRNSLPTPQLRRSSGTSGLLPVEQSSRWDRNNGKRPHQEFGIS) form a disordered region. Positions 428-445 (LNRNSLPTPQLRRSSGTS) are enriched in polar residues. The interval 436-460 (PQLRRSSGTSGLLPVEQSSRWDRNN) is interaction with PIK3R6. Residues 454-466 (SRWDRNNGKRPHQ) are compositionally biased toward basic and acidic residues. Residues 651 to 1079 (TNIEQEVSLD…KIWKEIVEEE (429 aa)) enclose the PDEase domain. The Proton donor role is filled by histidine 737. Position 737 (histidine 737) interacts with AMP. Mg(2+) is bound by residues histidine 741, histidine 821, aspartate 822, and aspartate 937. The AMP site is built by aspartate 822, aspartate 937, and glutamine 988. Composition is skewed to acidic residues over residues 1017–1041 (EEDN…EEME) and 1103–1112 (QVIEEADEEE). Disordered regions lie at residues 1017–1051 (EEDN…PPRR) and 1092–1112 (ENSS…DEEE).

Belongs to the cyclic nucleotide phosphodiesterase family. PDE3 subfamily. As to quaternary structure, homodimer. Interacts with PIK3CG; regulates PDE3B activity and thereby cAMP levels in cells. Interacts with RAPGEF3 and PIK3R6; form a signaling complex that regulates phosphatidylinositol 3-kinase gamma in angiogenesis. Interacts with ABHD15; this interaction regulates PDE3B's stability and expression and, thereby, impacts the antilipolytic action of insulin. It depends on Mg(2+) as a cofactor. Requires Mn(2+) as cofactor. Phosphorylation at Ser-295 mediates insulin-induced activation of PDE3B. As to expression, abundant in adipose tissues.

Its subcellular location is the membrane. It carries out the reaction a nucleoside 3',5'-cyclic phosphate + H2O = a nucleoside 5'-phosphate + H(+). The enzyme catalyses 3',5'-cyclic AMP + H2O = AMP + H(+). It catalyses the reaction 3',5'-cyclic GMP + H2O = GMP + H(+). Its activity is regulated as follows. Inhibited by cGMP. Functionally, cyclic nucleotide phosphodiesterase with a dual-specificity for the second messengers cAMP and cGMP, which are key regulators of many important physiological process. Regulates angiogenesis by inhibiting the cAMP-dependent guanine nucleotide exchange factor RAPGEF3 and downstream phosphatidylinositol 3-kinase gamma-mediated signaling. Controls cardiac contractility by reducing cAMP concentration in cardiocytes. The protein is cGMP-inhibited 3',5'-cyclic phosphodiesterase 3B of Homo sapiens (Human).